We begin with the raw amino-acid sequence, 148 residues long: HTH-type transcriptional regulator BilQ (148 aa).

The 140-residue stretch at 1–140 folds into the HTH marR-type domain; the sequence is MDFKNLQYES…LVKNLHVVKD (140 aa). The H-T-H motif DNA-binding region spans 54 to 77; that stretch reads LNDVSTEFEVDKAHTTRTISRLEQ.

Functionally, transcription regulator that regulates expression of the bilirubin reductase operon (bilQ, bilR and bilS). This Clostridioides difficile (strain CD3) protein is HTH-type transcriptional regulator BilQ.